The chain runs to 290 residues: GTPase Era (290 aa).

An Era-type G domain is found at 2-167; it reads KSGFVSIVGR…LDELVKYLPE (166 aa). The interval 10–17 is G1; that stretch reads GRTNAGKS. Residue 10–17 participates in GTP binding; sequence GRTNAGKS. The interval 36–40 is G2; that stretch reads NATRR. The tract at residues 57-60 is G3; the sequence is DTPG. GTP is bound by residues 57-61 and 116-119; these read DTPGL and NKVD. Residues 116–119 are G4; the sequence is NKVD. The G5 stretch occupies residues 146–148; it reads YSI. Residues 194–274 form the KH type-2 domain; sequence IYENLSDEIP…MLKLFVQLEK (81 aa).

The protein belongs to the TRAFAC class TrmE-Era-EngA-EngB-Septin-like GTPase superfamily. Era GTPase family. In terms of assembly, monomer.

The protein resides in the cytoplasm. Its subcellular location is the cell inner membrane. Functionally, an essential GTPase that binds both GDP and GTP, with rapid nucleotide exchange. Plays a role in 16S rRNA processing and 30S ribosomal subunit biogenesis and possibly also in cell cycle regulation and energy metabolism. The sequence is that of GTPase Era from Campylobacter lari (strain RM2100 / D67 / ATCC BAA-1060).